Reading from the N-terminus, the 401-residue chain is LL-diaminopimelate aminotransferase (401 aa).

2 residues coordinate substrate: Tyr15 and Gly42. Pyridoxal 5'-phosphate is bound by residues Tyr72, Ala108–Lys109, Tyr132, Asn176, Tyr207, and Ser235–Ser237. Substrate-binding residues include Lys109, Tyr132, and Asn176. Residue Lys238 is modified to N6-(pyridoxal phosphate)lysine. Pyridoxal 5'-phosphate-binding residues include Arg246 and Asn281. Substrate is bound by residues Asn281 and Arg377.

It belongs to the class-I pyridoxal-phosphate-dependent aminotransferase family. LL-diaminopimelate aminotransferase subfamily. As to quaternary structure, homodimer. It depends on pyridoxal 5'-phosphate as a cofactor.

It catalyses the reaction (2S,6S)-2,6-diaminopimelate + 2-oxoglutarate = (S)-2,3,4,5-tetrahydrodipicolinate + L-glutamate + H2O + H(+). It functions in the pathway amino-acid biosynthesis; L-lysine biosynthesis via DAP pathway; LL-2,6-diaminopimelate from (S)-tetrahydrodipicolinate (aminotransferase route): step 1/1. Involved in the synthesis of meso-diaminopimelate (m-DAP or DL-DAP), required for both lysine and peptidoglycan biosynthesis. Catalyzes the direct conversion of tetrahydrodipicolinate to LL-diaminopimelate. This chain is LL-diaminopimelate aminotransferase, found in Azobacteroides pseudotrichonymphae genomovar. CFP2.